The chain runs to 596 residues: Elongation factor 4 (596 aa).

One can recognise a tr-type G domain in the interval 2-184; sequence KQIRNFSIIA…VIVAKIPPPE (183 aa). GTP is bound by residues 14 to 19 and 131 to 134; these read DHGKST and NKID.

The protein belongs to the TRAFAC class translation factor GTPase superfamily. Classic translation factor GTPase family. LepA subfamily.

Its subcellular location is the cell inner membrane. It catalyses the reaction GTP + H2O = GDP + phosphate + H(+). Functionally, required for accurate and efficient protein synthesis under certain stress conditions. May act as a fidelity factor of the translation reaction, by catalyzing a one-codon backward translocation of tRNAs on improperly translocated ribosomes. Back-translocation proceeds from a post-translocation (POST) complex to a pre-translocation (PRE) complex, thus giving elongation factor G a second chance to translocate the tRNAs correctly. Binds to ribosomes in a GTP-dependent manner. The polypeptide is Elongation factor 4 (Shewanella baltica (strain OS223)).